Here is a 251-residue protein sequence, read N- to C-terminus: Carbohydrate deacetylase (251 aa).

Residues histidine 59 and histidine 122 each contribute to the Mg(2+) site.

This sequence belongs to the YdjC deacetylase family. As to quaternary structure, homodimer. Requires Mg(2+) as cofactor.

Functionally, probably catalyzes the deacetylation of acetylated carbohydrates an important step in the degradation of oligosaccharides. The protein is Carbohydrate deacetylase of Vibrio parahaemolyticus serotype O3:K6 (strain RIMD 2210633).